Consider the following 190-residue polypeptide: 6,7-dimethyl-8-ribityllumazine synthase (190 aa).

Residues tryptophan 31, 65–67, and 89–91 each bind 5-amino-6-(D-ribitylamino)uracil; these read SFE and CVI. Residue 94-95 participates in (2S)-2-hydroxy-3-oxobutyl phosphate binding; that stretch reads ET. Histidine 97 acts as the Proton donor in catalysis. 5-amino-6-(D-ribitylamino)uracil is bound at residue phenylalanine 122. Arginine 136 contacts (2S)-2-hydroxy-3-oxobutyl phosphate.

This sequence belongs to the DMRL synthase family.

The catalysed reaction is (2S)-2-hydroxy-3-oxobutyl phosphate + 5-amino-6-(D-ribitylamino)uracil = 6,7-dimethyl-8-(1-D-ribityl)lumazine + phosphate + 2 H2O + H(+). The protein operates within cofactor biosynthesis; riboflavin biosynthesis; riboflavin from 2-hydroxy-3-oxobutyl phosphate and 5-amino-6-(D-ribitylamino)uracil: step 1/2. Catalyzes the formation of 6,7-dimethyl-8-ribityllumazine by condensation of 5-amino-6-(D-ribitylamino)uracil with 3,4-dihydroxy-2-butanone 4-phosphate. This is the penultimate step in the biosynthesis of riboflavin. This Flavobacterium johnsoniae (strain ATCC 17061 / DSM 2064 / JCM 8514 / BCRC 14874 / CCUG 350202 / NBRC 14942 / NCIMB 11054 / UW101) (Cytophaga johnsonae) protein is 6,7-dimethyl-8-ribityllumazine synthase.